The chain runs to 187 residues: Orotate phosphoribosyltransferase (187 aa).

5-phospho-alpha-D-ribose 1-diphosphate is bound by residues Arg-99, Lys-100, Lys-103, His-105, and 125-133 (DDVITTGGS). Positions 129 and 157 each coordinate orotate.

It belongs to the purine/pyrimidine phosphoribosyltransferase family. PyrE subfamily. In terms of assembly, homodimer. Mg(2+) serves as cofactor.

It carries out the reaction orotidine 5'-phosphate + diphosphate = orotate + 5-phospho-alpha-D-ribose 1-diphosphate. It participates in pyrimidine metabolism; UMP biosynthesis via de novo pathway; UMP from orotate: step 1/2. In terms of biological role, catalyzes the transfer of a ribosyl phosphate group from 5-phosphoribose 1-diphosphate to orotate, leading to the formation of orotidine monophosphate (OMP). In Leptospira borgpetersenii serovar Hardjo-bovis (strain JB197), this protein is Orotate phosphoribosyltransferase.